The primary structure comprises 102 residues: uncharacterized protein (102 aa).

This is an uncharacterized protein from Methanocaldococcus jannaschii (strain ATCC 43067 / DSM 2661 / JAL-1 / JCM 10045 / NBRC 100440) (Methanococcus jannaschii).